Reading from the N-terminus, the 200-residue chain is Large ribosomal subunit protein uL4 (200 aa).

Positions 38 to 72 (GRQGTKQQKTRSDVAGGGKRPWRQKGTGRARAGTT) are disordered.

This sequence belongs to the universal ribosomal protein uL4 family. Part of the 50S ribosomal subunit.

In terms of biological role, one of the primary rRNA binding proteins, this protein initially binds near the 5'-end of the 23S rRNA. It is important during the early stages of 50S assembly. It makes multiple contacts with different domains of the 23S rRNA in the assembled 50S subunit and ribosome. Functionally, forms part of the polypeptide exit tunnel. The polypeptide is Large ribosomal subunit protein uL4 (Pseudomonas entomophila (strain L48)).